A 394-amino-acid polypeptide reads, in one-letter code: Phosphoglycerate kinase (394 aa).

Substrate contacts are provided by residues 21-23 (DFN), Arg-36, 59-62 (HLGR), Arg-118, and Arg-151. Ser-183 carries the phosphoserine modification. Positions 201 and 292 each coordinate ATP. Position 299 is a phosphothreonine (Thr-299). ATP-binding positions include Glu-323 and 350-353 (GGDS).

This sequence belongs to the phosphoglycerate kinase family. In terms of assembly, monomer.

The protein localises to the cytoplasm. It carries out the reaction (2R)-3-phosphoglycerate + ATP = (2R)-3-phospho-glyceroyl phosphate + ADP. Its pathway is carbohydrate degradation; glycolysis; pyruvate from D-glyceraldehyde 3-phosphate: step 2/5. In Bacillus cereus (strain G9842), this protein is Phosphoglycerate kinase.